The chain runs to 330 residues: Putative acetyltransferase ORF330 (330 aa).

The next 10 helical transmembrane spans lie at 29–49 (GFAS…LPLS), 50–70 (IFRP…FLLL), 90–110 (IYPL…YYFH), 118–138 (LFLH…SYVF), 163–183 (FLLA…IVTL), 190–210 (LLYF…IAYI), 225–245 (ISFL…NEFL), 252–272 (VVVY…PPKV), 273–293 (LSKV…WHLL), and 297–317 (LLGV…EFPL).

Its subcellular location is the host membrane. The protein is Putative acetyltransferase ORF330 of Acidianus convivator (ATV).